A 20-amino-acid chain; its full sequence is Small ribosomal subunit protein bS20 (20 aa).

It belongs to the bacterial ribosomal protein bS20 family.

Its function is as follows. Binds directly to 16S ribosomal RNA. This Brevundimonas diminuta (Pseudomonas diminuta) protein is Small ribosomal subunit protein bS20 (rpsT).